The chain runs to 393 residues: Putative N(4)-(beta-N-acetylglucosaminyl)-L-asparaginase GM21137 (393 aa).

The signal sequence occupies residues 1–23; it reads MRTHLRASLWVLCLASTAFSILA. 2 cysteine pairs are disulfide-bonded: C97/C102 and C196/C212. Catalysis depends on T243, which acts as the Nucleophile. Substrate-binding positions include 271–274 and 294–297; these read RVGD and TGDG. C354 and C381 are oxidised to a cystine.

This sequence belongs to the Ntn-hydrolase family. As to quaternary structure, heterotetramer of two alpha and two beta chains arranged as a dimer of alpha/beta heterodimers. Post-translationally, cleaved into an alpha and beta chain by autocatalysis; this activates the enzyme. The N-terminal residue of the beta subunit is responsible for the nucleophile hydrolase activity.

The catalysed reaction is N(4)-(beta-N-acetyl-D-glucosaminyl)-L-asparagine + H2O = N-acetyl-beta-D-glucosaminylamine + L-aspartate + H(+). Its function is as follows. Cleaves the GlcNAc-Asn bond which joins oligosaccharides to the peptide of asparagine-linked glycoproteins. In Drosophila sechellia (Fruit fly), this protein is Putative N(4)-(beta-N-acetylglucosaminyl)-L-asparaginase GM21137.